The primary structure comprises 146 residues: Hemoglobin subunit beta (146 aa).

V1 carries the N-acetylvaline modification. Residues 2-146 form the Globin domain; it reads HLTPDEKNAV…VANALAHKYH (145 aa). Residue T12 is modified to Phosphothreonine. Residue S44 is modified to Phosphoserine. K59 is subject to N6-acetyllysine. Heme b is bound at residue H63. The residue at position 82 (K82) is an N6-acetyllysine. Residue H92 participates in heme b binding. At C93 the chain carries S-nitrosocysteine. N6-acetyllysine is present on K144.

Belongs to the globin family. In terms of assembly, heterotetramer of two alpha chains and two beta chains. As to expression, red blood cells.

Functionally, involved in oxygen transport from the lung to the various peripheral tissues. In Piliocolobus badius (Western red colobus), this protein is Hemoglobin subunit beta (HBB).